We begin with the raw amino-acid sequence, 277 residues long: Release factor glutamine methyltransferase (277 aa).

S-adenosyl-L-methionine-binding positions include 117 to 121 (GTGTG), aspartate 140, tryptophan 168, and asparagine 183. 183 to 186 (NPPY) serves as a coordination point for substrate.

The protein belongs to the protein N5-glutamine methyltransferase family. PrmC subfamily.

It carries out the reaction L-glutaminyl-[peptide chain release factor] + S-adenosyl-L-methionine = N(5)-methyl-L-glutaminyl-[peptide chain release factor] + S-adenosyl-L-homocysteine + H(+). Methylates the class 1 translation termination release factors RF1/PrfA and RF2/PrfB on the glutamine residue of the universally conserved GGQ motif. The protein is Release factor glutamine methyltransferase of Salmonella typhimurium (strain LT2 / SGSC1412 / ATCC 700720).